A 914-amino-acid chain; its full sequence is Serine/threonine-protein kinase MST20 (914 aa).

The span at 1-12 shows a compositional bias: polar residues; it reads MDGHSNFTQPSD. Disordered regions lie at residues 1–140, 156–184, and 251–286; these read MDGH…QLQN, NQYS…LTFN, and AMSE…VLRK. Composition is skewed to low complexity over residues 13-26, 63-72, and 79-97; these read TSHA…SSSS, RSSTSLRRAP, and TPTS…PSSS. The segment covering 122 to 136 has biased composition (basic and acidic residues); the sequence is ARDRDSDPARNDHGH. A compositionally biased stretch (basic residues) spans 156-166; sequence NQYSAASHRRS. A compositionally biased stretch (polar residues) spans 175–184; that stretch reads PQSSNSLTFN. Positions 271 to 280 are enriched in basic and acidic residues; sequence RYSDETKEPK. The CRIB domain occupies 306–319; the sequence is ISAPENPVHVTHVG. The segment at 408-615 is disordered; sequence SPMISPPASP…RHRSRQSNGL (208 aa). Composition is skewed to low complexity over residues 516 to 548 and 562 to 576; these read AYPA…QAQA and QPQA…SQHQ. Residues 577–586 are compositionally biased toward polar residues; it reads YSRPTDANGA. The segment covering 587–596 has biased composition (low complexity); that stretch reads QQTQRPQQPQ. Residues 634 to 885 enclose the Protein kinase domain; it reads YRSFTKIGQG…AHDLLRHEFM (252 aa). Residues 640-648 and Lys663 each bind ATP; that span reads IGQGASGGV. The Proton acceptor role is filled by Asp753.

This sequence belongs to the protein kinase superfamily. STE Ser/Thr protein kinase family. STE20 subfamily.

The protein resides in the cytoplasm. Its subcellular location is the nucleus. The catalysed reaction is L-seryl-[protein] + ATP = O-phospho-L-seryl-[protein] + ADP + H(+). It catalyses the reaction L-threonyl-[protein] + ATP = O-phospho-L-threonyl-[protein] + ADP + H(+). Functionally, MAP4K component of the MAPK pathway required for the mating pheromone response and the regulation of cell polarity and cell cycle. Phosphorylates histone H2B to form H2BS10ph. Is involved in conidiation, aerial hyphal growth and infection-related morphogenesis. The protein is Serine/threonine-protein kinase MST20 (MST20) of Pyricularia oryzae (strain 70-15 / ATCC MYA-4617 / FGSC 8958) (Rice blast fungus).